The sequence spans 355 residues: Protein RecA (355 aa).

Position 67–74 (67–74) interacts with ATP; that stretch reads GPESSGKT.

This sequence belongs to the RecA family.

The protein localises to the cytoplasm. Its function is as follows. Can catalyze the hydrolysis of ATP in the presence of single-stranded DNA, the ATP-dependent uptake of single-stranded DNA by duplex DNA, and the ATP-dependent hybridization of homologous single-stranded DNAs. It interacts with LexA causing its activation and leading to its autocatalytic cleavage. This chain is Protein RecA, found in Histophilus somni (strain 2336) (Haemophilus somnus).